A 119-amino-acid polypeptide reads, in one-letter code: Large ribosomal subunit protein uL22 (119 aa).

Belongs to the universal ribosomal protein uL22 family. As to quaternary structure, part of the 50S ribosomal subunit.

This protein binds specifically to 23S rRNA; its binding is stimulated by other ribosomal proteins, e.g. L4, L17, and L20. It is important during the early stages of 50S assembly. It makes multiple contacts with different domains of the 23S rRNA in the assembled 50S subunit and ribosome. Functionally, the globular domain of the protein is located near the polypeptide exit tunnel on the outside of the subunit, while an extended beta-hairpin is found that lines the wall of the exit tunnel in the center of the 70S ribosome. The protein is Large ribosomal subunit protein uL22 of Rickettsia conorii (strain ATCC VR-613 / Malish 7).